Reading from the N-terminus, the 622-residue chain is MSTEHKQYLSAVTLAAIGVVYGDIGTSPLYTLRECFSGHYGFDVRPDVVFGFLSLIFWMLILVVSVKYLTYVMRADNAGEGGILTLMSLAGRNISSRATSILVVLGLIGGSFFYGEVVITPAISVMSAIEGLEIAAPALDPYIVPCSIAVLTLLFVIQKHGTGSVGKLFAPVMLVWFLTLALLGLRSIIANPEVLAALNPKWAISFFVEYKSVSFFALGAVVLAITGVEALYADMGHFGKFPIRLAWFTVVLPSLVLNYFGQGALLLKNPEAIKNPFFLLAPDWALIPLLILATLATVIASQAVISGVFSLTRQAVRLGYLPPMRIIHTSEMESGQIYIPVINWTLYLAVVLVIIGFERSSNLAAAYGIAVTGTMVITSILFCTVAWKNWHWNRFLVVFLLMVLLIIDIPMFSANVLKLFSGGWLPLSLGLVMFIIMTTWKSERFSLLRRMHEHSNSLEAMIASLEKSPPVRVPGTAVYMSRAMNVIPFALLHNLKHNKVLHERVVLLTMRTDDVPYVHNVERVTIEQLSPTFWRVVARYGWRETPNVAEIFHRCGLEGLSCQMMETSFFMSHESLILTKRPWHLFLRGKLFIALSRNALRAPDQFEIPPNRVIELGTQVEI.

12 helical membrane-spanning segments follow: residues 9–29 (LSAV…TSPL), 46–66 (PDVV…VVSV), 101–121 (ILVV…VITP), 137–157 (PALD…LFVI), 165–185 (VGKL…LLGL), 213–233 (VSFF…ALYA), 247–267 (WFTV…ALLL), 276–296 (PFFL…ATLA), 337–357 (IYIP…IIGF), 363–383 (LAAA…ILFC), 395–415 (FLVV…FSAN), and 416–436 (VLKL…MFII).

It belongs to the HAK/KUP transporter (TC 2.A.72) family.

The protein resides in the cell inner membrane. The enzyme catalyses K(+)(in) + H(+)(in) = K(+)(out) + H(+)(out). In terms of biological role, responsible for the low-affinity transport of potassium into the cell. Likely operates as a K(+):H(+) symporter. The chain is Low affinity potassium transport system protein Kup from Yersinia pestis (strain Pestoides F).